Reading from the N-terminus, the 317-residue chain is GPI-specific phospholipase A2-like PGAP3 (317 aa).

Residues Met-1–Gly-18 form the signal peptide. Residues Asp-19–Arg-93 lie on the Lumenal side of the membrane. Asn-35 carries an N-linked (GlcNAc...) asparagine glycan. Residues Phe-94–Leu-114 form a helical membrane-spanning segment. At Leu-115–Arg-132 the chain is on the cytoplasmic side. The chain crosses the membrane as a helical span at residues Thr-133–Thr-153. Residues Arg-154 to Asp-163 are Lumenal-facing. Residues Tyr-164–Met-180 traverse the membrane as a helical segment. Residues Arg-181 to Ser-189 lie on the Cytoplasmic side of the membrane. The helical transmembrane segment at Ile-190–Thr-210 threads the bilayer. At Leu-211 to Asn-219 the chain is on the lumenal side. Residues Met-220–Trp-240 traverse the membrane as a helical segment. The Cytoplasmic segment spans residues Arg-241 to Cys-251. The helical transmembrane segment at Val-252–Val-272 threads the bilayer. Position 273 (Met-273) is a topological domain, lumenal. Residues Trp-274 to Phe-293 form a helical membrane-spanning segment. Over Tyr-294–Asp-317 the chain is Cytoplasmic.

It belongs to the PGAP3 family.

It localises to the golgi apparatus membrane. Involved in the fatty acid remodeling steps of GPI-anchor maturation where the unsaturated acyl chain at sn-2 of inositol phosphate is replaced by a saturated stearoyl chain. May catalyze the first step of the fatty acid remodeling, by removing the unsaturated acyl chain at sn-2 of inositol phosphate, generating a lyso-GPI intermediate. The fatty acid remodeling steps is critical for the integration of GPI-APs into lipid rafts. The chain is GPI-specific phospholipase A2-like PGAP3 from Xenopus laevis (African clawed frog).